We begin with the raw amino-acid sequence, 432 residues long: Solute carrier family 38 member 8 (432 aa).

Helical transmembrane passes span 29 to 49, 59 to 79, 103 to 123, 144 to 164, 175 to 195, 215 to 237, 253 to 273, 292 to 312, 345 to 365, 368 to 388, and 409 to 429; these read AVFI…PWAF, FLVA…LGYA, LCEI…LRVI, AAQN…LSAL, ILGT…YYLW, VFSV…SIYC, LSLL…FLTF, IIVA…IVLF, LPLT…LPDL, IISI…GLCL, and GILS…VAMV.

Belongs to the amino acid/polyamine transporter 2 family. Expressed in neurons located in the gray matter. Highly expressed in thalamus, hypothalamus, amygdala and pons. Expressed in the CA3 area of hippocampus and in the Purkinje layer of the cerebellum (at protein level). Expressed in the eye.

The protein resides in the membrane. The protein localises to the cytoplasm. It localises to the cell cortex. It is found in the cell projection. Its subcellular location is the axon. The enzyme catalyses L-glutamine(out) = L-glutamine(in). It catalyses the reaction L-alanine(in) = L-alanine(out). It carries out the reaction L-histidine(out) = L-histidine(in). The catalysed reaction is L-aspartate(out) = L-aspartate(in). The enzyme catalyses L-arginine(in) = L-arginine(out). It catalyses the reaction L-leucine(in) = L-leucine(out). In terms of biological role, electrogenic sodium-dependent amino acid transporter with a preference for L-glutamine, L-alanine, L-histidine, L-aspartate and L-arginine. May facilitate glutamine uptake in both excitatory and inhibitory neurons. The transport mechanism and stoichiometry remain to be elucidated. This chain is Solute carrier family 38 member 8, found in Mus musculus (Mouse).